The sequence spans 133 residues: Small ribosomal subunit protein uS8 (133 aa).

The disordered stretch occupies residues 1 to 30; sequence MANHDPISDMLTRIRNASEKRHETTKVPAS. Residues 16–25 are compositionally biased toward basic and acidic residues; that stretch reads NASEKRHETT.

It belongs to the universal ribosomal protein uS8 family. Part of the 30S ribosomal subunit. Contacts proteins S5 and S12.

One of the primary rRNA binding proteins, it binds directly to 16S rRNA central domain where it helps coordinate assembly of the platform of the 30S subunit. This is Small ribosomal subunit protein uS8 from Synechococcus sp. (strain CC9902).